We begin with the raw amino-acid sequence, 514 residues long: Transmembrane protein 151B (514 aa).

The segment at 1-40 (MSAEGEPAEAVAETPANSPGEEAAAAAATTDVDVREEQRP) is disordered. A run of 3 helical transmembrane segments spans residues 57–77 (CLLLSILMFVCLGAVTWCQVT), 104–124 (YVYIPLAFLAMLYVVYLVECW), and 286–306 (PWYVSHYAFWVAALFMLSWPL).

It belongs to the TMEM151 family.

The protein resides in the membrane. This Xenopus tropicalis (Western clawed frog) protein is Transmembrane protein 151B (tmem151b).